Here is a 474-residue protein sequence, read N- to C-terminus: MTPRTLFDKVWDAHIVRPQTAETPAVIYIDLHLIHEVTSPQAFTELRQRGLKVRRPDRTLATMDHSTPTTPRGADGIIPVVDAQAAAQLRQLEQNCAEFGIPLFALGSEYQGIVHVIGPEQGLTQPGMTIVCGDSHTSTHGAFGALAFGIGTSEVAHVLATQCLIQTRPKTMEVRVDGRLAPGVTAKDIILAIIARYGVGAGTGHVFEYTGETIRALSMEERMTICNMSIEGGARAGMIAPDDTTFEYIAGRPFAPKGKAWDEAVAYWRTLPTDEGAVYDRIITLDASQLTPMITYGTNPGMGMPIDGRIPTPEELPDPAARQALDKALRYMDLRPGQPLLGHKIDVVFLGSCTNSRISDLRMAARLLKGRKIADGVRMMVVPGSQQVKKQAEAEGLHEIFRAAGAEWREAGCSACLGMNDDKVPPGRYAVSTSNRNFEGRQGPGARTFLASPLTAVASAIEGAVADPRRYLGG.

[4Fe-4S] cluster-binding residues include cysteine 353, cysteine 413, and cysteine 416.

This sequence belongs to the aconitase/IPM isomerase family. LeuC type 1 subfamily. As to quaternary structure, heterodimer of LeuC and LeuD. [4Fe-4S] cluster serves as cofactor.

The enzyme catalyses (2R,3S)-3-isopropylmalate = (2S)-2-isopropylmalate. It functions in the pathway amino-acid biosynthesis; L-leucine biosynthesis; L-leucine from 3-methyl-2-oxobutanoate: step 2/4. Functionally, catalyzes the isomerization between 2-isopropylmalate and 3-isopropylmalate, via the formation of 2-isopropylmaleate. The sequence is that of 3-isopropylmalate dehydratase large subunit from Roseiflexus sp. (strain RS-1).